The sequence spans 557 residues: Inositol-3-phosphate synthase 1 (557 aa).

Gly-67, Gly-68, Asn-69, Asn-70, Asp-141, Ser-177, Val-178, Gln-188, Arg-191, Thr-228, Ala-229, Asn-230, Thr-231, Gly-278, Ser-279, Asp-303, Ser-306, Asn-337, Asn-338, Asp-339, and Lys-352 together coordinate NAD(+). A Phosphoserine modification is found at Ser-279. Ser-357 bears the Phosphoserine mark. NAD(+)-binding residues include Gly-390, Asp-391, Asp-419, and Ser-420. Residues 512–557 (GPGIKPGEVVATSPLPCKKEPTPATNGCTGDANGHPQAPTPKLSTA) form a disordered region. Phosphoserine is present on Ser-524.

Belongs to the myo-inositol 1-phosphate synthase family. It depends on NAD(+) as a cofactor. As to expression, in testis, it is expressed in Sertoli cells. Highly expressed in 2 types of germ cells, pachytene spermatocytes and round spermatids.

It localises to the cytoplasm. The enzyme catalyses D-glucose 6-phosphate = 1D-myo-inositol 3-phosphate. Its pathway is polyol metabolism; myo-inositol biosynthesis; myo-inositol from D-glucose 6-phosphate: step 1/2. Key enzyme in myo-inositol biosynthesis pathway that catalyzes the conversion of glucose 6-phosphate to 1-myo-inositol 1-phosphate in a NAD-dependent manner. Rate-limiting enzyme in the synthesis of all inositol-containing compounds. In Mus musculus (Mouse), this protein is Inositol-3-phosphate synthase 1 (Isyna1).